The primary structure comprises 615 residues: MSKKFVHTQEELEKLSLKELENLAASMREKIIQVVSKNGGHLSSNLGAVELSIAMHLVFDAKKDPFIFDVSHQSYTHKLLSGKEEIFDTLRQINGLSGYTKPSEGDYFVAGHSSTSISLAVGACKAIALKGEKRIPVALIGDGALSAGMAYEALNELGDSKFPCVILLNDNEMSISKPIGAISKYLSQAMATQFYQSFKKRIAKMLDILPDSATYMAKRFEESFKLITPGLLFEELGLEYIGPIDGHNLGEIISALKQAKAMQKPCVIHAQTIKGKGYVLAEGKHAKWHGVGAFDIDSGESVKKSDTKKSATEIFSKNLLDLASKYENIVGVTAAMPSGTGLDKLIEKYPNRFWDVAIAEQHAVTSMAAMAKEGFKPFIAIYSTFLQRAYDQVIHDCAIMNLNVVFAMDRAGIVGEDGETHQGVFDLSFLAPLPNFTLLAPRDEQMMQNIMEYAYLHQGPIAFRYPRGSFILDKEFNPCEIKLGKAQWLVKNSSEIAFLGYGQGVAKAWQVLRALQEMNNNANLIDLIFAKPLDEELLCELAKKSKIWFIFSENVKIGGIESLINNFLQKYDLHVKVVSFEYEDKFIEHGKTSEVEKNLEKDVNSLLTKVLKFYH.

Residues His72 and 111–113 (GHS) contribute to the thiamine diphosphate site. Asp142 contributes to the Mg(2+) binding site. Residues 143–144 (GA), Asn171, Tyr278, and Glu360 each bind thiamine diphosphate. Residue Asn171 coordinates Mg(2+).

Belongs to the transketolase family. DXPS subfamily. Homodimer. The cofactor is Mg(2+). Thiamine diphosphate is required as a cofactor.

The catalysed reaction is D-glyceraldehyde 3-phosphate + pyruvate + H(+) = 1-deoxy-D-xylulose 5-phosphate + CO2. It participates in metabolic intermediate biosynthesis; 1-deoxy-D-xylulose 5-phosphate biosynthesis; 1-deoxy-D-xylulose 5-phosphate from D-glyceraldehyde 3-phosphate and pyruvate: step 1/1. Its function is as follows. Catalyzes the acyloin condensation reaction between C atoms 2 and 3 of pyruvate and glyceraldehyde 3-phosphate to yield 1-deoxy-D-xylulose-5-phosphate (DXP). The protein is 1-deoxy-D-xylulose-5-phosphate synthase of Campylobacter jejuni (strain RM1221).